The sequence spans 54 residues: Large ribosomal subunit protein bL33B (54 aa).

Belongs to the bacterial ribosomal protein bL33 family.

The chain is Large ribosomal subunit protein bL33B from Mycobacterium sp. (strain KMS).